A 239-amino-acid chain; its full sequence is tRNA (guanine-N(7)-)-methyltransferase (239 aa).

Residues Glu68, Glu93, Asp120, and Asp143 each contribute to the S-adenosyl-L-methionine site. The active site involves Asp143. Substrate-binding positions include Lys147, Asp180, and 217 to 220 (TKFE).

Belongs to the class I-like SAM-binding methyltransferase superfamily. TrmB family.

The enzyme catalyses guanosine(46) in tRNA + S-adenosyl-L-methionine = N(7)-methylguanosine(46) in tRNA + S-adenosyl-L-homocysteine. Its pathway is tRNA modification; N(7)-methylguanine-tRNA biosynthesis. Functionally, catalyzes the formation of N(7)-methylguanine at position 46 (m7G46) in tRNA. This Vibrio parahaemolyticus serotype O3:K6 (strain RIMD 2210633) protein is tRNA (guanine-N(7)-)-methyltransferase.